Here is a 632-residue protein sequence, read N- to C-terminus: Bifunctional protein GlmU (632 aa).

The interval 1-229 (MAERELSVAI…PQEIVGVNDR (229 aa)) is pyrophosphorylase. UDP-N-acetyl-alpha-D-glucosamine contacts are provided by residues 11–14 (LAAG), Lys-25, Gln-76, and 81–82 (GT). Asp-106 contributes to the Mg(2+) binding site. Gly-143, Glu-158, Asn-173, and Asn-227 together coordinate UDP-N-acetyl-alpha-D-glucosamine. Asn-227 contacts Mg(2+). Positions 230-250 (RQLAQAYQILQDRLKEAWMEA) are linker. Positions 251–632 (GVTFVDPDSS…ADNSRPKSLQ (382 aa)) are N-acetyltransferase. Arg-332 and Lys-350 together coordinate UDP-N-acetyl-alpha-D-glucosamine. The active-site Proton acceptor is the His-362. Positions 365 and 376 each coordinate UDP-N-acetyl-alpha-D-glucosamine. Acetyl-CoA contacts are provided by residues Ala-379, 385 to 386 (NY), Ala-422, and Arg-441. The disordered stretch occupies residues 600 to 632 (VAGDPCWPSPPPQPQQNQQTKPEADNSRPKSLQ). Residues 621-632 (PEADNSRPKSLQ) show a composition bias toward basic and acidic residues.

In the N-terminal section; belongs to the N-acetylglucosamine-1-phosphate uridyltransferase family. This sequence in the C-terminal section; belongs to the transferase hexapeptide repeat family. In terms of assembly, homotrimer. It depends on Mg(2+) as a cofactor.

Its subcellular location is the cytoplasm. It carries out the reaction alpha-D-glucosamine 1-phosphate + acetyl-CoA = N-acetyl-alpha-D-glucosamine 1-phosphate + CoA + H(+). It catalyses the reaction N-acetyl-alpha-D-glucosamine 1-phosphate + UTP + H(+) = UDP-N-acetyl-alpha-D-glucosamine + diphosphate. It participates in nucleotide-sugar biosynthesis; UDP-N-acetyl-alpha-D-glucosamine biosynthesis; N-acetyl-alpha-D-glucosamine 1-phosphate from alpha-D-glucosamine 6-phosphate (route II): step 2/2. Its pathway is nucleotide-sugar biosynthesis; UDP-N-acetyl-alpha-D-glucosamine biosynthesis; UDP-N-acetyl-alpha-D-glucosamine from N-acetyl-alpha-D-glucosamine 1-phosphate: step 1/1. The protein operates within bacterial outer membrane biogenesis; LPS lipid A biosynthesis. In terms of biological role, catalyzes the last two sequential reactions in the de novo biosynthetic pathway for UDP-N-acetylglucosamine (UDP-GlcNAc). The C-terminal domain catalyzes the transfer of acetyl group from acetyl coenzyme A to glucosamine-1-phosphate (GlcN-1-P) to produce N-acetylglucosamine-1-phosphate (GlcNAc-1-P), which is converted into UDP-GlcNAc by the transfer of uridine 5-monophosphate (from uridine 5-triphosphate), a reaction catalyzed by the N-terminal domain. The protein is Bifunctional protein GlmU of Synechococcus sp. (strain JA-2-3B'a(2-13)) (Cyanobacteria bacterium Yellowstone B-Prime).